The sequence spans 156 residues: UPF0178 protein Jann_2168 (156 aa).

This sequence belongs to the UPF0178 family.

This is UPF0178 protein Jann_2168 from Jannaschia sp. (strain CCS1).